A 449-amino-acid polypeptide reads, in one-letter code: UDP-N-acetylmuramate--L-alanine ligase (449 aa).

121–127 (GAHGKSS) contacts ATP.

Belongs to the MurCDEF family.

It is found in the cytoplasm. The catalysed reaction is UDP-N-acetyl-alpha-D-muramate + L-alanine + ATP = UDP-N-acetyl-alpha-D-muramoyl-L-alanine + ADP + phosphate + H(+). It participates in cell wall biogenesis; peptidoglycan biosynthesis. In terms of biological role, cell wall formation. The sequence is that of UDP-N-acetylmuramate--L-alanine ligase from Helicobacter pylori (strain P12).